Consider the following 547-residue polypeptide: Natural resistance-associated macrophage protein 1 (547 aa).

Residues 1-30 are disordered; sequence MTGDKDPQSVSRPNYGSISHPPSSEPQQEP. The Cytoplasmic segment spans residues 1–54; that stretch reads MTGDKDPQSVSRPNYGSISHPPSSEPQQEPLRTTYLSEKIPIPDTEPGTFSLRK. Polar residues predominate over residues 8-17; the sequence is QSVSRPNYGS. Low complexity predominate over residues 21-30; that stretch reads PPSSEPQQEP. The chain crosses the membrane as a helical span at residues 55–75; sequence LWAFTGPGFLMSIAFLDPGNI. The Extracellular portion of the chain corresponds to 76-81; that stretch reads ESDLQA. The helical transmembrane segment at 82–102 threads the bilayer; the sequence is GAVAGFKLLWVLLWATVLGLL. Topologically, residues 103–139 are cytoplasmic; that stretch reads CQRLAARLGVVTGKDLGEICHLYYPKVPRTLLWLTIE. Residues 140-160 form a helical membrane-spanning segment; that stretch reads LAIVGSDMQEVIGTAIAFSLL. Residues 161–164 lie on the Extracellular side of the membrane; sequence SAGR. A helical transmembrane segment spans residues 165–185; sequence IPLWGGVLITIVDTFFFLFLD. Residues 186–193 are Cytoplasmic-facing; sequence NYGLRKLE. Residues 194–214 traverse the membrane as a helical segment; the sequence is AFFGILITIMALTFGYEYVVA. The Extracellular segment spans residues 215-240; the sequence is RPAQVALLQGLLLPSCPGCGRPELLQ. The helical transmembrane segment at 241–261 threads the bilayer; the sequence is AVGIVGAIIMPHNIYLHSALV. Over 262-286 the chain is Cytoplasmic; sequence KSREIDRSRRPDIREANMYFLIEAS. The chain crosses the membrane as a helical span at residues 287–307; sequence IALSVSFFINLFVVAVFGQAF. Residues 308 to 346 are Extracellular-facing; the sequence is YQQTNEAAFNVCANSSLHDYAKIFPRNNLTVEVDIYQGG. N-linked (GlcNAc...) asparagine glycosylation is found at Asn-321 and Asn-335. Residues 347-367 form a helical membrane-spanning segment; sequence VMLGCVFGPAALYIWAVGLLA. Topologically, residues 368–394 are cytoplasmic; that stretch reads AGQSSTMTGTYAGQFVMEGFLRLRWSR. The helical transmembrane segment at 395-415 threads the bilayer; sequence FARVLLTRSCAILPTVLVVVF. Residues 416–432 are Extracellular-facing; sequence RDLKDLSGLNDLLNVLQ. A helical transmembrane segment spans residues 433 to 453; sequence SLLLPFAVLPILTFTSMPALM. The Cytoplasmic portion of the chain corresponds to 454–464; sequence QEFANGRLSKA. Residues 465-485 form a helical membrane-spanning segment; the sequence is ITSFIMALVCAINLYFVVIYL. At 486–492 the chain is on the extracellular side; sequence PSLPHPA. The chain crosses the membrane as a helical span at residues 493–513; the sequence is YFILVALLAIVYLGLTTYLVW. The Cytoplasmic segment spans residues 514–547; the sequence is TCFIAHGVTLLAHSSHQHFLYGLPDVEEKGKISG.

Belongs to the NRAMP family.

It is found in the late endosome membrane. It localises to the lysosome membrane. The catalysed reaction is Zn(2+)(in) + H(+)(out) = Zn(2+)(out) + H(+)(in). The enzyme catalyses Fe(2+)(in) + H(+)(out) = Fe(2+)(out) + H(+)(in). It catalyses the reaction Mn(2+)(in) + H(+)(out) = Mn(2+)(out) + H(+)(in). Functionally, macrophage-specific antiporter that fluxes metal ions in either direction against a proton gradient. Localized to late endosomal lysosomal membranes, delivers bivalent cations from the cytosol into these acidic compartments where they may directly affect antimicrobial activity. Involved in iron metabolism and host natural resistance to infection with intracellular parasites. Pathogen resistance involves sequestration of Fe(2+) and Mn(2+), cofactors of both prokaryotic and eukaryotic catalases and superoxide dismutases, not only to protect the macrophage against its own generation of reactive oxygen species, but to deny the cations to the pathogen for synthesis of its protective enzymes. The protein is Natural resistance-associated macrophage protein 1 (SLC11A1) of Canis lupus familiaris (Dog).